The sequence spans 238 residues: Ribosomal RNA small subunit methyltransferase G (238 aa).

S-adenosyl-L-methionine is bound by residues Gly77, Phe82, 128 to 129 (AE), and Arg147.

This sequence belongs to the methyltransferase superfamily. RNA methyltransferase RsmG family.

The protein localises to the cytoplasm. Functionally, specifically methylates the N7 position of guanine in position 535 of 16S rRNA. The chain is Ribosomal RNA small subunit methyltransferase G from Geobacillus kaustophilus (strain HTA426).